We begin with the raw amino-acid sequence, 594 residues long: Type IV inositol polyphosphate 5-phosphatase 7 (594 aa).

Residues 246–300 are disordered; it reads FRCGHRPSDYSRRPSDYSRPSDYYSRPSNYSRPSDVSRWGSSDDDNGPGDSPSTF. Over residues 251-261 the composition is skewed to basic and acidic residues; that stretch reads RPSDYSRRPSD. Positions 262 to 279 are enriched in low complexity; it reads YSRPSDYYSRPSNYSRPS. Catalytic stretches follow at residues 435–450 and 515–530; these read DRVI…IALS and KRRT…WHGE.

The protein belongs to the inositol polyphosphate 5-phosphatase family. As to expression, broadly expressed in emerging organs. Mostly localized in procambium of growing organs. Restricted to vascular differentiating cells of young organs.

The protein resides in the nucleus. It is found in the cell membrane. It catalyses the reaction a 1,2-diacyl-sn-glycero-3-phospho-(1D-myo-inositol-4,5-bisphosphate) + H2O = a 1,2-diacyl-sn-glycero-3-phospho-(1D-myo-inositol 4-phosphate) + phosphate. It carries out the reaction a 1,2-diacyl-sn-glycero-3-phospho-(1D-myo-inositol-3,4,5-trisphosphate) + H2O = a 1,2-diacyl-sn-glycero-3-phospho-(1D-myo-inositol-3,4-bisphosphate) + phosphate. Its function is as follows. Has phosphatase activity toward PtdIns(4,5)P2 and at a lower extent toward PtdIns(3,4,5)P3 but not toward Ins(1,4,5)P3. Acts redundantly with CVP2 for maintaining vascular continuity. Regulates phosphoinositide-dependent VAN3 localization. Functions in salt stress response by regulating reactive oxygen species (ROS) production and stress-responsive genes expression. The chain is Type IV inositol polyphosphate 5-phosphatase 7 from Arabidopsis thaliana (Mouse-ear cress).